Consider the following 147-residue polypeptide: MATMLKVSLVLSLLGFLVIAVVTPSAANPFRKSVVLGGKSGVPNIRTNREIQQLGRYCVEQFNQQAQNEQGNIGSIAKTDTAISNPLQFSRVVSAQKQVVAGLKYYLRIEVTQPNGSTRMFDSVVVIQPWLHSKQLLGFTPVVSPVY.

The N-terminal stretch at 1 to 27 (MATMLKVSLVLSLLGFLVIAVVTPSAA) is a signal peptide. The region spanning 87–117 (LQFSRVVSAQKQVVAGLKYYLRIEVTQPNGS) is the Cystatin domain. The short motif at 98–102 (QVVAG) is the Secondary area of contact element. Asn115 is a glycosylation site (N-linked (GlcNAc...) asparagine).

The protein belongs to the cystatin family. Phytocystatin subfamily.

The protein resides in the secreted. In terms of biological role, specific inhibitor of cysteine proteinases. Probably involved in the regulation of endogenous processes and in defense against pests and pathogens. This chain is Cysteine proteinase inhibitor 2 (CYS2), found in Arabidopsis thaliana (Mouse-ear cress).